Here is a 176-residue protein sequence, read N- to C-terminus: Small ribosomal subunit protein uS5 (176 aa).

The S5 DRBM domain maps to 14-77; the sequence is MQEKLIHINR…DQARRWMTSI (64 aa).

Belongs to the universal ribosomal protein uS5 family. As to quaternary structure, part of the 30S ribosomal subunit. Contacts proteins S4 and S8.

With S4 and S12 plays an important role in translational accuracy. Its function is as follows. Located at the back of the 30S subunit body where it stabilizes the conformation of the head with respect to the body. This Acidithiobacillus ferrooxidans (strain ATCC 23270 / DSM 14882 / CIP 104768 / NCIMB 8455) (Ferrobacillus ferrooxidans (strain ATCC 23270)) protein is Small ribosomal subunit protein uS5.